A 471-amino-acid polypeptide reads, in one-letter code: Ribulose bisphosphate carboxylase large chain 2 (471 aa).

Substrate is bound by residues asparagine 116 and threonine 166. Lysine 168 functions as the Proton acceptor in the catalytic mechanism. Lysine 170 provides a ligand contact to substrate. Residues lysine 194, aspartate 196, and glutamate 197 each contribute to the Mg(2+) site. N6-carboxylysine is present on lysine 194. The active-site Proton acceptor is histidine 287. 3 residues coordinate substrate: arginine 288, histidine 320, and serine 372.

Belongs to the RuBisCO large chain family. Type I subfamily. In terms of assembly, heterohexadecamer of 8 large chains and 8 small chains. Forms a CsoS2-CsoS1-RuBisCO complex. It depends on Mg(2+) as a cofactor.

Its subcellular location is the carboxysome. It catalyses the reaction 2 (2R)-3-phosphoglycerate + 2 H(+) = D-ribulose 1,5-bisphosphate + CO2 + H2O. It carries out the reaction D-ribulose 1,5-bisphosphate + O2 = 2-phosphoglycolate + (2R)-3-phosphoglycerate + 2 H(+). In terms of biological role, ruBisCO catalyzes two reactions: the carboxylation of D-ribulose 1,5-bisphosphate, the primary event in carbon dioxide fixation, as well as the oxidative fragmentation of the pentose substrate. Both reactions occur simultaneously and in competition at the same active site. Replacing the endogenous type I ccbLS genes in H.neapolitanus with this carboxysomally targeted enzyme reconstitutes RuBisCO with about 25% of normal activity; the active enzyme is targeted to carboxysomes. This Hydrogenovibrio crunogenus (strain DSM 25203 / XCL-2) (Thiomicrospira crunogena) protein is Ribulose bisphosphate carboxylase large chain 2.